The following is a 483-amino-acid chain: Auxin transporter-like protein 2 (483 aa).

Residues 1-53 are Cytoplasmic-facing; sequence MENGEKAAETVVVGNYVEMEKDGKALDIKSKLSDMFWHGGSAYDAWFSCASNQ. The chain crosses the membrane as a helical span at residues 54–71; it reads VAQVLLTLPYSFSQLGML. Over 72–73 the chain is Extracellular; it reads SG. The helical transmembrane segment at 74–94 threads the bilayer; sequence ILFQLFYGILGSWTAYLISIL. The Cytoplasmic portion of the chain corresponds to 95–130; the sequence is YVEYRTRKEREKVNFRNHVIQWFEVLDGLLGKHWRN. Residues 131-151 form a helical membrane-spanning segment; sequence VGLAFNCTFLLFGSVIQLIAC. Topologically, residues 152–166 are extracellular; sequence ASNIYYINDNLDKRT. Residues 167 to 187 form a helical membrane-spanning segment; it reads WTYIFGACCATTVFIPSFHNY. Residues 188 to 190 are Cytoplasmic-facing; sequence RIW. Residues 191-211 traverse the membrane as a helical segment; it reads SFLGLLMTTYTAWYLTIASIL. Over 212-226 the chain is Extracellular; it reads HGQVEGVKHSGPSKL. The helical transmembrane segment at 227 to 247 threads the bilayer; that stretch reads VLYFTGATNILYTFGGHAVTV. Topologically, residues 248–261 are cytoplasmic; it reads EIMHAMWKPQKFKS. Residues 262–282 traverse the membrane as a helical segment; the sequence is IYLFATLYVLTLTLPSASAVY. Residues 283 to 306 are Extracellular-facing; the sequence is WAFGDLLLNHSNAFALLPKNLYRD. An N-linked (GlcNAc...) asparagine glycan is attached at N291. Residues 307–327 traverse the membrane as a helical segment; the sequence is FAVVLMLIHQFITFGFACTPL. Over 328–350 the chain is Cytoplasmic; it reads YFVWEKLIGMHECRSMCKRAAAR. The chain crosses the membrane as a helical span at residues 351 to 371; it reads LPVVIPIWFLAIIFPFFGPIN. Residues 372-374 are Extracellular-facing; sequence STV. A helical membrane pass occupies residues 375–395; sequence GSLLVSFTVYIIPALAHIFTF. At 396–422 the chain is on the cytoplasmic side; that stretch reads RSSAARENAVEQPPRFLGRWTGAFTIN. The chain crosses the membrane as a helical span at residues 423 to 443; sequence AFIVVWVFIVGFGFGGWASMI. Topologically, residues 444–483 are extracellular; sequence NFVHQIDTFGLFTKCYQCPPPVMVSPPPISHPHFNHTHGL. Residue N478 is glycosylated (N-linked (GlcNAc...) asparagine).

It belongs to the amino acid/polyamine transporter 2 family. Amino acid/auxin permease (AAAP) (TC 2.A.18.1) subfamily.

Its subcellular location is the cell membrane. In terms of biological role, carrier protein involved in proton-driven auxin influx. Mediates the formation of auxin gradient from developing leaves (site of auxin biosynthesis) to tips by contributing to the loading of auxin in vascular tissues and facilitating acropetal (base to tip) auxin transport within inner tissues of the root apex, and basipetal (tip to base) auxin transport within outer tissues of the root apex. The sequence is that of Auxin transporter-like protein 2 (LAX2) from Arabidopsis thaliana (Mouse-ear cress).